The chain runs to 139 residues: Ribosomal RNA large subunit methyltransferase H (139 aa).

S-adenosyl-L-methionine-binding positions include Leu-56, Gly-88, and 107–112 (LSLMTF).

It belongs to the RNA methyltransferase RlmH family. As to quaternary structure, homodimer.

It localises to the cytoplasm. The catalysed reaction is pseudouridine(1915) in 23S rRNA + S-adenosyl-L-methionine = N(3)-methylpseudouridine(1915) in 23S rRNA + S-adenosyl-L-homocysteine + H(+). Its function is as follows. Specifically methylates the pseudouridine at position 1915 (m3Psi1915) in 23S rRNA. The sequence is that of Ribosomal RNA large subunit methyltransferase H from Coprothermobacter proteolyticus (strain ATCC 35245 / DSM 5265 / OCM 4 / BT).